The following is a 370-amino-acid chain: MTSPTNSTMLTYTTNNYYDDDYYEYSTITDYYNTINNDITSSSVIKAFDNNCTFLEDTKYHIIVIHIILFLLGSIGNIFVVSLIAFKRNKSITDIYILNLSMSDCIFVFQIPFIVYSKLDQWIFGNILCKIMSVLYYVGFFSNMFIITLMSIDRYFAIVHPIKRQPYRTKRIGILMCCSAWLLSLILSSPVSKLYENIPHMSKDIYQCTLTNENDSIIAFIKRLMQIEITILGFLIPIIIFVYCYYRIFTTVVRLRNRRKYKSIKIVLMIVVCSLICWIPLYIVLMIATIVSLYTSNIFRHLCLYLNLAYAITFSETISLARCCINPIIYTLIGEHVRSRISSICSCIYRDNRIRKKLFSRKSSSSSNII.

Over 1-61 (MTSPTNSTML…CTFLEDTKYH (61 aa)) the chain is Extracellular. N-linked (GlcNAc...) asparagine; by host glycans are attached at residues Asn6 and Asn51. A helical membrane pass occupies residues 62 to 82 (IIVIHIILFLLGSIGNIFVVS). Over 83–94 (LIAFKRNKSITD) the chain is Cytoplasmic. The chain crosses the membrane as a helical span at residues 95-115 (IYILNLSMSDCIFVFQIPFIV). The Extracellular portion of the chain corresponds to 116–131 (YSKLDQWIFGNILCKI). The helical transmembrane segment at 132–152 (MSVLYYVGFFSNMFIITLMSI) threads the bilayer. Topologically, residues 153-171 (DRYFAIVHPIKRQPYRTKR) are cytoplasmic. A helical transmembrane segment spans residues 172-192 (IGILMCCSAWLLSLILSSPVS). The Extracellular segment spans residues 193 to 223 (KLYENIPHMSKDIYQCTLTNENDSIIAFIKR). A helical membrane pass occupies residues 224 to 244 (LMQIEITILGFLIPIIIFVYC). At 245 to 265 (YYRIFTTVVRLRNRRKYKSIK) the chain is on the cytoplasmic side. The helical transmembrane segment at 266-286 (IVLMIVVCSLICWIPLYIVLM) threads the bilayer. Residues 287–300 (IATIVSLYTSNIFR) are Extracellular-facing. The chain crosses the membrane as a helical span at residues 301 to 321 (HLCLYLNLAYAITFSETISLA). Over 322-370 (RCCINPIIYTLIGEHVRSRISSICSCIYRDNRIRKKLFSRKSSSSSNII) the chain is Cytoplasmic.

Belongs to the G-protein coupled receptor 1 family.

The protein resides in the host cell membrane. Its function is as follows. Putative chemokine receptor. This chain is G-protein coupled receptor homolog K2, found in Sus scrofa (Pig).